A 776-amino-acid chain; its full sequence is Transcription activator of gluconeogenesis HCAG_03671 (776 aa).

Positions 1 to 70 are disordered; that stretch reads MTASTQNGSP…NAKDPLRPRR (70 aa). 2 stretches are compositionally biased toward polar residues: residues 21–41 and 50–60; these read NQES…QSPA and ENGQKHTSTAA. A DNA-binding region (zn(2)-C6 fungal-type) is located at residues 77–105; the sequence is CFACQRAHLTCGDERPCQRCIKRGLQDAC. Disordered stretches follow at residues 140-159, 179-248, 286-351, 556-593, and 651-726; these read RTNA…KDSR, TQAK…PFGA, GAGD…NIYN, NLNV…GGGG, and REAQ…SPKQ. Residues 142–155 are compositionally biased toward low complexity; sequence NASQQQNGPNSNSN. Residues 195–217 show a composition bias toward polar residues; the sequence is MQDTSINPSAFQAPSPTSTPNFD. The span at 218–229 shows a compositional bias: low complexity; it reads LSSNPPNRNLSS. Polar residues-rich tracts occupy residues 230–244, 292–322, 334–351, and 557–576; these read AMTQ…QTQD, PSDS…NTQP, WNPS…NIYN, and LNVN…TPRN. Over residues 657–669 the composition is skewed to gly residues; sequence GPDGKGGGGGGGD. A compositionally biased stretch (low complexity) spans 670 to 714; the sequence is VATTAATTSTSTSNGANSSGHANANRNNTNPNNSSPPSSSSAAAA.

Belongs to the ERT1/acuK family.

The protein localises to the nucleus. In terms of biological role, transcription factor which regulates nonfermentable carbon utilization. Activator of gluconeogenetic genes. The sequence is that of Transcription activator of gluconeogenesis HCAG_03671 from Ajellomyces capsulatus (strain NAm1 / WU24) (Darling's disease fungus).